Reading from the N-terminus, the 460-residue chain is Endoglucanase C (460 aa).

The signal sequence occupies residues 1 to 32 (MIKGSSLKRFKSLVMAAIFSVSIISTAIASSA). The active-site Proton donor is Glu99. The Nucleophile role is filled by Asp155. A Dockerin domain is found at 400-460 (KPDLKGDVNN…FAQLKVKLLN (61 aa)).

This sequence belongs to the glycosyl hydrolase 8 (cellulase D) family. Monomer. There are two forms of the cellulase. The shorter form lacks probably the C-terminal reiterated domains.

It catalyses the reaction Endohydrolysis of (1-&gt;4)-beta-D-glucosidic linkages in cellulose, lichenin and cereal beta-D-glucans.. It participates in glycan metabolism; cellulose degradation. Functionally, the biological conversion of cellulose to glucose generally requires three types of hydrolytic enzymes: (1) Endoglucanases which cut internal beta-1,4-glucosidic bonds; (2) Exocellobiohydrolases that cut the disaccharide cellobiose from the non-reducing end of the cellulose polymer chain; (3) Beta-1,4-glucosidases which hydrolyze the cellobiose and other short cello-oligosaccharides to glucose. This Ruminiclostridium cellulolyticum (strain ATCC 35319 / DSM 5812 / JCM 6584 / H10) (Clostridium cellulolyticum) protein is Endoglucanase C (celCCC).